The sequence spans 660 residues: UvrABC system protein B (660 aa).

The 388-residue stretch at 27–414 (NGVNEGKRHQ…TDEMVQQIIR (388 aa)) folds into the Helicase ATP-binding domain. 40 to 47 (GATGTGKT) contributes to the ATP binding site. A Beta-hairpin motif is present at residues 93–116 (YYDYYQPEAYVPSTDTFIEKDASI). Positions 431-593 (QIDDLLGEIQ…ITPTTINKKI (163 aa)) constitute a Helicase C-terminal domain. Residues 603 to 622 (NDETNEQQQTEVPKKMTKKE) are disordered. The region spanning 624-659 (EKTIANIEKEMKQAAKDLDFEKATELRDMLFELKAE) is the UVR domain.

Belongs to the UvrB family. In terms of assembly, forms a heterotetramer with UvrA during the search for lesions. Interacts with UvrC in an incision complex.

It localises to the cytoplasm. The UvrABC repair system catalyzes the recognition and processing of DNA lesions. A damage recognition complex composed of 2 UvrA and 2 UvrB subunits scans DNA for abnormalities. Upon binding of the UvrA(2)B(2) complex to a putative damaged site, the DNA wraps around one UvrB monomer. DNA wrap is dependent on ATP binding by UvrB and probably causes local melting of the DNA helix, facilitating insertion of UvrB beta-hairpin between the DNA strands. Then UvrB probes one DNA strand for the presence of a lesion. If a lesion is found the UvrA subunits dissociate and the UvrB-DNA preincision complex is formed. This complex is subsequently bound by UvrC and the second UvrB is released. If no lesion is found, the DNA wraps around the other UvrB subunit that will check the other stand for damage. In Staphylococcus saprophyticus subsp. saprophyticus (strain ATCC 15305 / DSM 20229 / NCIMB 8711 / NCTC 7292 / S-41), this protein is UvrABC system protein B.